A 549-amino-acid chain; its full sequence is Protein EPD2 (549 aa).

The signal sequence occupies residues 1–20 (MISVIKSLLTLSVLSTLAAA). Asparagine 41 carries N-linked (GlcNAc...) asparagine glycosylation. Cysteines 82 and 111 form a disulfide. Asparagine 173 and asparagine 261 each carry an N-linked (GlcNAc...) asparagine glycan. 5 disulfide bridges follow: cysteine 224-cysteine 358, cysteine 242-cysteine 273, cysteine 381-cysteine 432, cysteine 390-cysteine 456, and cysteine 409-cysteine 414. Asparagine 467 carries an N-linked (GlcNAc...) asparagine glycan. A disordered region spans residues 470–518 (ASTSCSAAGGRGLQSGRRSSTTRGGSSSSRSSSSSSSSSTGSGSSNAGI). Low complexity predominate over residues 484 to 514 (SGRRSSTTRGGSSSSRSSSSSSSSSTGSGSS).

The protein belongs to the glycosyl hydrolase 72 family.

Its subcellular location is the cell membrane. This chain is Protein EPD2 (EPD2), found in Candida maltosa (Yeast).